The following is a 360-amino-acid chain: S-adenosylmethionine-dependent nucleotide dehydratase RSAD2 (360 aa).

Residues 44–71 (KGQPRVRGEPKETQETHEDPGSAQPTTP) are disordered. The segment covering 49–63 (VRGEPKETQETHEDP) has biased composition (basic and acidic residues). The Radical SAM core domain occupies 68 to 288 (PTTPVSVNYH…LQRHKDVSCL (221 aa)). Positions 82, 86, and 89 each coordinate [4Fe-4S] cluster. Lys196 carries the post-translational modification N6-acetyllysine. Lys205 participates in a covalent cross-link: Glycyl lysine isopeptide (Lys-Gly) (interchain with G-Cter in ubiquitin).

The protein belongs to the radical SAM superfamily. RSAD2 family. As to quaternary structure, homodimer. Interacts with IRAK1 and TRAF6. Interacts with FPPS. Interacts with HADHB. Interacts (via C-terminus) with VAPA/VAP33 (via C-terminus). Requires [4Fe-4S] cluster as cofactor. Post-translationally, acetylated by HAT1. HAT1-mediated acetylation of Lys-196 in turn recruits UBE4A that stimulates RSAD2 polyubiquitination leading to proteasomal degradation. In terms of processing, 'Lys-6'-linked polyubiquitination at Lys-205 leads to RSAD2 protein degradation. In terms of tissue distribution, in neonatal rat tibia, specifically localized in cells of the periosteum, in osteoblasts lining endosteal and peristeal bone surfaces, to articular surfaces of cartilage and in perichondral cells but not in chondrocytes (at protein level). Expressed predominantly in bone marrow and spleen.

The protein localises to the endoplasmic reticulum membrane. The protein resides in the golgi apparatus. It localises to the endoplasmic reticulum. It is found in the lipid droplet. Its subcellular location is the mitochondrion. The protein localises to the mitochondrion inner membrane. The protein resides in the mitochondrion outer membrane. It catalyses the reaction CTP + AH2 + S-adenosyl-L-methionine = 3'-deoxy-3',4'-didehydro-CTP + 5'-deoxyadenosine + L-methionine + A + H2O + H(+). Its activity is regulated as follows. IRAK1 and TRAF6 synergistically activate RSAD2 increasing its activity with CTP as substrate about 10-fold. Interferon-inducible antiviral protein which plays a major role in the cell antiviral state induced by type I and type II interferon. Catalyzes the conversion of cytidine triphosphate (CTP) to 3'-deoxy-3',4'-didehydro-CTP (ddhCTP) via a SAM-dependent radical mechanism. In turn, ddhCTP acts as a chain terminator for the RNA-dependent RNA polymerases from multiple viruses and directly inhibits viral replication. Therefore, inhibits a wide range of DNA and RNA viruses. Also promotes TLR7 and TLR9-dependent production of IFN-beta production in plasmacytoid dendritic cells (pDCs) by facilitating 'Lys-63'-linked ubiquitination of IRAK1 by TRAF6. Plays a role in CD4+ T-cells activation and differentiation. Facilitates T-cell receptor (TCR)-mediated GATA3 activation and optimal T-helper 2 (Th2) cytokine production by modulating NFKB1 and JUNB activities. Can inhibit secretion of soluble proteins. The protein is S-adenosylmethionine-dependent nucleotide dehydratase RSAD2 of Rattus norvegicus (Rat).